A 636-amino-acid polypeptide reads, in one-letter code: DNA-directed RNA polymerase subunit gamma (636 aa).

Residues cysteine 71, cysteine 73, cysteine 86, and cysteine 89 each coordinate Zn(2+). Mg(2+) is bound by residues aspartate 467, aspartate 469, and aspartate 471.

This sequence belongs to the RNA polymerase beta' chain family. RpoC1 subfamily. In cyanobacteria the RNAP catalytic core is composed of 2 alpha, 1 beta, 1 beta', 1 gamma and 1 omega subunit. When a sigma factor is associated with the core the holoenzyme is formed, which can initiate transcription. Mg(2+) is required as a cofactor. Requires Zn(2+) as cofactor.

It carries out the reaction RNA(n) + a ribonucleoside 5'-triphosphate = RNA(n+1) + diphosphate. Its function is as follows. DNA-dependent RNA polymerase catalyzes the transcription of DNA into RNA using the four ribonucleoside triphosphates as substrates. The polypeptide is DNA-directed RNA polymerase subunit gamma (Picosynechococcus sp. (strain ATCC 27264 / PCC 7002 / PR-6) (Agmenellum quadruplicatum)).